A 309-amino-acid chain; its full sequence is Pyridoxal 5'-phosphate synthase subunit PDX1.1 (309 aa).

Methionine 1 carries the N-acetylmethionine modification. Aspartate 41 provides a ligand contact to D-ribose 5-phosphate. Lysine 98 (schiff-base intermediate with D-ribose 5-phosphate) is an active-site residue. Glycine 170 lines the D-ribose 5-phosphate pocket. Arginine 182 serves as a coordination point for D-glyceraldehyde 3-phosphate. D-ribose 5-phosphate contacts are provided by residues glycine 231 and 252 to 253; that span reads GS.

This sequence belongs to the PdxS/SNZ family. In terms of assembly, homodimer or heterodimer with PDX1.2 or PDX1.3. Interacts with PDX2. In terms of tissue distribution, expressed in flowers, shoots, leaves and weakly in roots.

The protein resides in the cytoplasm. It carries out the reaction aldehydo-D-ribose 5-phosphate + D-glyceraldehyde 3-phosphate + L-glutamine = pyridoxal 5'-phosphate + L-glutamate + phosphate + 3 H2O + H(+). Its pathway is cofactor biosynthesis; pyridoxal 5'-phosphate biosynthesis. Its function is as follows. Catalyzes the formation of pyridoxal 5'-phosphate from ribose 5-phosphate (RBP), glyceraldehyde 3-phosphate (G3P) and ammonia. The ammonia is provided by PDX2. Can also use ribulose 5-phosphate and dihydroxyacetone phosphate as substrates, resulting from enzyme-catalyzed isomerization of RBP and G3P, respectively. Also plays an indirect role in resistance to singlet oxygen-generating photosensitizers. This is Pyridoxal 5'-phosphate synthase subunit PDX1.1 (PDX11) from Arabidopsis thaliana (Mouse-ear cress).